The primary structure comprises 332 residues: DNA-directed RNA polymerase subunit alpha (332 aa).

The interval 1 to 234 (MTVTANQVLR…DQLSVFGDFT (234 aa)) is alpha N-terminal domain (alpha-NTD). Residues 248-332 (VDPVLLRPID…AGVASHGMLG (85 aa)) form an alpha C-terminal domain (alpha-CTD) region.

It belongs to the RNA polymerase alpha chain family. As to quaternary structure, homodimer. The RNAP catalytic core consists of 2 alpha, 1 beta, 1 beta' and 1 omega subunit. When a sigma factor is associated with the core the holoenzyme is formed, which can initiate transcription.

The catalysed reaction is RNA(n) + a ribonucleoside 5'-triphosphate = RNA(n+1) + diphosphate. DNA-dependent RNA polymerase catalyzes the transcription of DNA into RNA using the four ribonucleoside triphosphates as substrates. This chain is DNA-directed RNA polymerase subunit alpha, found in Stenotrophomonas maltophilia (strain K279a).